The primary structure comprises 1091 residues: Sodium/potassium exporting P-type ATPase 5 (1091 aa).

The Cytoplasmic segment spans residues 1–63 (MSEGTVKENN…LGDDTKIDYK (63 aa)). Residues 64–84 (AMVLHQVCNAMIMVLVISMAI) form a helical membrane-spanning segment. Over 85 to 90 (SFAVRD) the chain is Extracellular. The helical transmembrane segment at 91 to 111 (WITGGVISFVIAVNVLIGLVQ) threads the bilayer. Topologically, residues 112 to 282 (EYKATKTMNS…TNVGTPLHRK (171 aa)) are cytoplasmic. Residues 283-303 (LSKLAVLLFWIAVLFAIIVMA) traverse the membrane as a helical segment. Residues 304 to 312 (SQKFDVDKR) are Extracellular-facing. Residues 313 to 333 (VAIYAICVALSMIPSSLVVVL) form a helical membrane-spanning segment. Over 334 to 815 (TITMSVGAAV…RRMTDNIQKF (482 aa)) the chain is Cytoplasmic. Asp-369 acts as the 4-aspartylphosphate intermediate in catalysis. Asp-369 and Thr-371 together coordinate Mg(2+). Thr-371 and Glu-483 together coordinate ATP. The disordered stretch occupies residues 499 to 525 (ALTGEKSTNQSNENDQSSLSQHNEKPG). The span at 503–519 (EKSTNQSNENDQSSLSQ) shows a compositional bias: polar residues. ATP-binding residues include Lys-561, Arg-606, Thr-673, Gly-674, Asp-675, Arg-732, and Lys-738. Asp-757 contacts Mg(2+). Position 760 (Asn-760) interacts with ATP. The chain crosses the membrane as a helical span at residues 816 to 836 (VLQLLAENVAQALYLIIGLVF). The Extracellular segment spans residues 837 to 848 (RDENGKSVFPLS). The chain crosses the membrane as a helical span at residues 849-869 (PVEVLWIIVVTSCFPAMGLGL). At 870-885 (EKAAPDLMDRPPNDSE) the chain is on the cytoplasmic side. Residues 886–906 (VGIFTWEVIIDTFAYGIIMTG) traverse the membrane as a helical segment. At 907–943 (SCMASFTGSLYGINSGRLGHDCDGTYNSSCRDVYRSR) the chain is on the extracellular side. The helical transmembrane segment at 944–964 (SAAFATMTWCALILAWEVVDM) threads the bilayer. The Cytoplasmic segment spans residues 965–991 (RRSFFRMHPDTDSPVKEFFRSIWGNQF). A helical transmembrane segment spans residues 992–1012 (LFWSIIFGFVSAFPVVYIPVI). Residues 1013–1021 (NDKVFLHKP) are Extracellular-facing. Residues 1022–1042 (IGAEWGLAIAFTIAFWIGAEL) form a helical membrane-spanning segment. Residues 1043 to 1091 (YKCGKRRYFKTQRAHNSENDLERSSKHDPFEAYSTSTTLQSEINISVKH) are Cytoplasmic-facing.

The protein belongs to the cation transport ATPase (P-type) (TC 3.A.3) family. Type IID subfamily. Mg(2+) is required as a cofactor. In terms of processing, the active site is phosphorylated in presence of sodium or potassium and in conditions of higher pH. Not phosphorylated in presence of calcium ions.

It is found in the cell membrane. The catalysed reaction is Na(+)(in) + ATP + H2O = Na(+)(out) + ADP + phosphate + H(+). It carries out the reaction K(+)(in) + ATP + H2O = K(+)(out) + ADP + phosphate + H(+). In terms of biological role, catalyzes the hydrolysis of ATP coupled with the export of sodium and potassium from the cell. May export potassium less efficiently. May transport other cations such as lithium. Sodium/potassium efflux ATPases are involved in salt tolerance and maintaining the membrane potential across the plasma membrane in high salinity (Na+) or alkaline (K+) environments. The sequence is that of Sodium/potassium exporting P-type ATPase 5 from Saccharomyces cerevisiae (strain ATCC 204508 / S288c) (Baker's yeast).